Reading from the N-terminus, the 510-residue chain is Bifunctional purine biosynthesis protein PurH (510 aa).

The MGS-like domain maps to 1–142; that stretch reads MRALISVSDK…KNFKDVLIVT (142 aa).

The protein belongs to the PurH family.

The catalysed reaction is (6R)-10-formyltetrahydrofolate + 5-amino-1-(5-phospho-beta-D-ribosyl)imidazole-4-carboxamide = 5-formamido-1-(5-phospho-D-ribosyl)imidazole-4-carboxamide + (6S)-5,6,7,8-tetrahydrofolate. The enzyme catalyses IMP + H2O = 5-formamido-1-(5-phospho-D-ribosyl)imidazole-4-carboxamide. It functions in the pathway purine metabolism; IMP biosynthesis via de novo pathway; 5-formamido-1-(5-phospho-D-ribosyl)imidazole-4-carboxamide from 5-amino-1-(5-phospho-D-ribosyl)imidazole-4-carboxamide (10-formyl THF route): step 1/1. It participates in purine metabolism; IMP biosynthesis via de novo pathway; IMP from 5-formamido-1-(5-phospho-D-ribosyl)imidazole-4-carboxamide: step 1/1. This chain is Bifunctional purine biosynthesis protein PurH, found in Campylobacter curvus (strain 525.92).